Consider the following 123-residue polypeptide: Methicillin resistance regulatory protein MecI (123 aa).

Residues 7-71 (EISSAEWEFM…KDNKIFQYYS (65 aa)) constitute a DNA-binding region (H-T-H motif). The segment at 74–123 (EESDIKYKTSKNFINKVYKGGFNSLVLNFVEKEDLSQDEIEELRNILNKK) is important for dimerization.

The protein belongs to the BlaI transcriptional regulatory family. As to quaternary structure, monomer and homodimer. Upon exposure to beta-lactams, proteolytic cleavage at a single site impairs dimerization and abolishes repressor activity.

Its subcellular location is the cytoplasm. Transcriptional repressor that constitutively blocks the transcription of the gene for the penicillin-binding protein MecA. Binds DNA as a dimer. This Staphylococcus aureus (strain Mu50 / ATCC 700699) protein is Methicillin resistance regulatory protein MecI (mecI).